The following is a 466-amino-acid chain: Argininosuccinate lyase (466 aa).

The protein belongs to the lyase 1 family. Argininosuccinate lyase subfamily.

The protein localises to the cytoplasm. It carries out the reaction 2-(N(omega)-L-arginino)succinate = fumarate + L-arginine. The protein operates within amino-acid biosynthesis; L-arginine biosynthesis; L-arginine from L-ornithine and carbamoyl phosphate: step 3/3. The polypeptide is Argininosuccinate lyase (Ehrlichia ruminantium (strain Gardel)).